Consider the following 47-residue polypeptide: MYYAVVLVILAVVAGIAGFRGIAGLSFRVAKFLIVIFLVLALVTFLL.

The next 2 membrane-spanning stretches (helical) occupy residues 5 to 25 (VVLVILAVVAGIAGFRGIAGL) and 27 to 47 (FRVAKFLIVIFLVLALVTFLL).

This sequence belongs to the UPF0391 family.

The protein localises to the cell membrane. The protein is UPF0391 membrane protein rrnAC2507 of Haloarcula marismortui (strain ATCC 43049 / DSM 3752 / JCM 8966 / VKM B-1809) (Halobacterium marismortui).